Reading from the N-terminus, the 1105-residue chain is Probable diguanylate cyclase DgcE (1105 aa).

10 helical membrane-spanning segments follow: residues 9–29, 38–58, 64–84, 88–108, 127–147, 156–176, 190–207, 211–228, 236–256, and 270–290; these read LIALPHPLLHLVSLGLVSFIF, QFGTQLAPLWFPTSIMMVAFY, MWPGIALSCSLGNIAASILLF, SLNMTWTTINIVEAVVGAVLL, LALGSAIVPPLLGGVLVVLLT, FLIWVLSESIGALALVPLGLL, LLFESLLTLAITLTLSWL, YLPWPFTFIIVLLMWSAV, FLIFLTTVMMVSLMMAADPSL, and WLPFLLILLPANIMTMVMYAF. The region spanning 300-370 is the PAS 1 domain; the sequence is SETHFRNAME…QQVEKLISGE (71 aa). PAC domains follow at residues 374–426 and 501–552; these read YSME…VNQQ and FKLE…ALFQ. A PAS 2 domain is found at 553-623; it reads EKERLHITLD…LMENIYSADT (71 aa). The PAC 3 domain maps to 626–680; it reads SAIEQDVVLHCRSGGSYDVHYSITPLSTLDGSNIGSVLVIQDVTESRKMLRQLSY. The GGDEF domain occupies 712 to 845; sequence QRHALVFIDL…GRGRVTVYEP (134 aa). Asp-720 provides a ligand contact to Mg(2+). 3 residues coordinate substrate: Asn-728, His-733, and Asp-737. Residue Asp-763 participates in Mg(2+) binding. Asp-763 acts as the Proton acceptor in catalysis. Arg-783 is a binding site for substrate. An EAL domain is found at 855 to 1104; it reads AAMSLDEQWR…LLVNSSYFAI (250 aa).

Homodimer. The cofactor is Mg(2+).

It is found in the cell inner membrane. The catalysed reaction is 2 GTP = 3',3'-c-di-GMP + 2 diphosphate. The protein operates within purine metabolism; 3',5'-cyclic di-GMP biosynthesis. In terms of biological role, catalyzes the synthesis of cyclic-di-GMP (c-di-GMP) via the condensation of 2 GTP molecules. Involved in the control of the switch from cell motility to adhesion via regulation of cellular levels of c-di-GMP. Part of a signaling cascade that regulates curli biosynthesis. The cascade is composed of two c-di-GMP control modules, in which c-di-GMP controlled by the DgcE/PdeH pair (module I) regulates the activity of the DgcM/PdeR pair (module II), which in turn regulates activity of the transcription factor MlrA and expression of the master biofilm regulator csgD. The protein is Probable diguanylate cyclase DgcE of Escherichia coli (strain K12).